The following is a 307-amino-acid chain: Cyclin-dependent kinase 5 activator 1 (307 aa).

S8 bears the Phosphoserine; by CDK5 mark. Residues S96–A136 form a disordered region. The segment covering Q100–P110 has biased composition (pro residues). Polar residues predominate over residues N112 to V125. T138 is subject to Phosphothreonine; by CDK5.

The protein belongs to the cyclin-dependent kinase 5 activator family. Heterodimer composed of a catalytic subunit CDK5 and a regulatory subunit CDK5R1 (p25) and macromolecular complex composed of at least CDK5, CDK5R1 (p35) and CDK5RAP1 or CDK5RAP2 or CDK5RAP3. Only the heterodimer shows kinase activity. Interacts with EPHA4 and NGEF; may mediate the activation of NGEF by EPHA4. Interacts with RASGRF2. The complex p35/CDK5 interacts with CLOCK. Post-translationally, the p35 form is proteolytically cleaved by calpain, giving rise to the p25 form. P35 has a 5 to 10 fold shorter half-life compared to p25. The conversion results in deregulation of the CDK5 kinase: p25/CDK5 kinase displays an increased and altered tau phosphorylation in comparison to the p35/CDK5 kinase in vivo. Myristoylated. A proper myristoylation signal is essential for the proper distribution of p35. In terms of processing, phosphorylation at Ser-8 and Thr-138 by CDK5 prevents calpain-mediated proteolysis. Post-translationally, ubiquitinated, leading to its degradation: degradation of p35 by proteasome results in down-regulation of CDK5 activity. During this process, CDK5 phosphorylates p35 and induces its ubiquitination and subsequent degradation. Ubiquitinated by the CRL2(FEM1B) complex, which recognizes the -Gly-Leu-Asp-Arg C-degron at the C-terminus, leading to its degradation. In terms of tissue distribution, brain and neuron specific.

It is found in the cell membrane. The protein resides in the cell projection. Its subcellular location is the neuron projection. It localises to the nucleus. The protein localises to the cytoplasm. It is found in the perinuclear region. The protein resides in the perikaryon. P35 is a neuron specific activator of CDK5. The complex p35/CDK5 is required for neurite outgrowth and cortical lamination. Involved in dendritic spine morphogenesis by mediating the EFNA1-EPHA4 signaling. Activator of TPKII. The complex p35/CDK5 participates in the regulation of the circadian clock by modulating the function of CLOCK protein: phosphorylates CLOCK at 'Thr-451' and 'Thr-461' and regulates the transcriptional activity of the CLOCK-BMAL1 heterodimer in association with altered stability and subcellular distribution. This is Cyclin-dependent kinase 5 activator 1 (CDK5R1) from Spermophilus citellus (European ground squirrel).